The chain runs to 448 residues: Homogentisate 1,2-dioxygenase (448 aa).

Histidine 303 functions as the Proton acceptor in the catalytic mechanism. Fe cation-binding residues include histidine 346 and glutamate 352. Residues tyrosine 361 and histidine 382 each coordinate homogentisate. Histidine 382 contributes to the Fe cation binding site.

This sequence belongs to the homogentisate dioxygenase family. As to quaternary structure, hexamer; dimer of trimers. Fe cation serves as cofactor.

It catalyses the reaction homogentisate + O2 = 4-maleylacetoacetate + H(+). It participates in amino-acid degradation; L-phenylalanine degradation; acetoacetate and fumarate from L-phenylalanine: step 4/6. Its function is as follows. Involved in the catabolism of homogentisate (2,5-dihydroxyphenylacetate or 2,5-OH-PhAc), a central intermediate in the degradation of phenylalanine and tyrosine. Catalyzes the oxidative ring cleavage of the aromatic ring of homogentisate to yield maleylacetoacetate. This chain is Homogentisate 1,2-dioxygenase, found in Rhodopseudomonas palustris (strain BisB5).